The sequence spans 240 residues: Mannose-binding protein C (240 aa).

Positions 1–18 are cleaved as a signal peptide; that stretch reads MSLFPSLHLLLLIVMTAS. 2 consecutive Collagen-like domains span residues 39 to 61 and 67 to 97; these read SPGI…KGEP and GLQG…GDSG. Residue P46 is modified to Hydroxyproline. The interval 48-102 is disordered; that stretch reads KDGLDGAKGEKGEPGQGLIGLQGLPGMVGPQGSPGIPGLPGLKGQKGDSGIDPGN. Over residues 49–60 the composition is skewed to basic and acidic residues; that stretch reads DGLDGAKGEKGE. P72, P81, and P87 each carry hydroxyproline. Positions 104–122 form a coiled coil; sequence LANLRSELDNIKKWLIFAQ. Positions 126–237 constitute a C-type lectin domain; it reads VGKKLYLTNG…CSSQLSAVCE (112 aa). Disulfide bonds link C147–C236 and C214–C228.

Interacts with MASP1 and MASP2. Interacts with MEP1A and MEP1B and may inhibit their catalytic activity. Forms oligomeric complexes of 2 or 3 homotrimers. As to expression, expressed in liver. Weakly expressed in kidney and testis.

It is found in the secreted. In terms of biological role, calcium-dependent lectin involved in innate immune defense. Binds mannose, fucose and N-acetylglucosamine on different microorganisms and activates the lectin complement pathway. Binds to late apoptotic cells, as well as to apoptotic blebs and to necrotic cells, but not to early apoptotic cells, facilitating their uptake by macrophages. According to some authors, it only binds mannose. The chain is Mannose-binding protein C from Sus scrofa (Pig).